A 546-amino-acid chain; its full sequence is MRIPLAALIAMTIPCLATGQIHWGNLSKIGVVGTSSASYKVVTQSSHQSLVIKLMPNITAIDNCTKTEIGEYKRLLGTVLKPIGEALNAITKNIKPIQSSTTSRRHKRFAGVVLAGAALGVATAAQITAGIALHQSMMNSQAIESLKASLVTTNQAIEEIRQAGQEMILAVQGVQDYINNELVPAMGQLSCDMVGQKLGLKLLRYYTEILSLFGPSLRDPVSAEISIQALSYALGGDINKILNRLGYSGSDLLAILESKGIKAKITYVDIESYFIVLSIAYPSLSEIKGVIVHRLEGVSYNIGSQEWYTTVPRYVATQGYLISNFDDTPCAFTPEGTISSQNALYPMSPLLQECFRGSTRSCARTLVSGSIGNRFILSKGNLIANCASILCKCYTTGSIISQDPDKILTYIAADQCPVVEVNGVTIQVGSREYPDAVYLHNIDLGPPISLEKLDVGTDLGNAVTKLERAKDLLDSSDLILKNIKGVSVTNTGYILIGVGLIAVVGIIIVTCCCKKSSSDSRASTVVLNPGLKPDLTGTSKSYIRSL.

The N-terminal stretch at 1-19 (MRIPLAALIAMTIPCLATG) is a signal peptide. At 20 to 491 (QIHWGNLSKI…NIKGVSVTNT (472 aa)) the chain is on the extracellular side. N-linked (GlcNAc...) asparagine; by host glycans are attached at residues N25, N57, and N63. The interval 109 to 133 (FAGVVLAGAALGVATAAQITAGIAL) is fusion peptide. Residues 134–162 (HQSMMNSQAIESLKASLVTTNQAIEEIRQ) adopt a coiled-coil conformation. 3 cysteine pairs are disulfide-bonded: C354–C362, C386–C391, and C393–C416. Residues 458–483 (DLGNAVTKLERAKDLLDSSDLILKNI) are a coiled coil. A helical membrane pass occupies residues 492–512 (GYILIGVGLIAVVGIIIVTCC). The Cytoplasmic segment spans residues 513 to 546 (CKKSSSDSRASTVVLNPGLKPDLTGTSKSYIRSL).

It belongs to the paramyxoviruses fusion glycoprotein family. In terms of assembly, homotrimer of disulfide-linked F1-F2. The inactive precursor F0 is glycosylated and proteolytically cleaved into F1 and F2 to be functionally active. The cleavage is mediated by cellular proteases during the transport and maturation of the polypeptide.

It localises to the virion membrane. The protein resides in the host cell membrane. Class I viral fusion protein. Under the current model, the protein has at least 3 conformational states: pre-fusion native state, pre-hairpin intermediate state, and post-fusion hairpin state. During viral and plasma cell membrane fusion, the heptad repeat (HR) regions assume a trimer-of-hairpins structure, positioning the fusion peptide in close proximity to the C-terminal region of the ectodomain. The formation of this structure appears to drive apposition and subsequent fusion of viral and plasma cell membranes. Directs fusion of viral and cellular membranes leading to delivery of the nucleocapsid into the cytoplasm. This fusion is pH independent and occurs directly at the outer cell membrane. The trimer of F1-F2 (F protein) probably interacts with HN at the virion surface. Upon HN binding to its cellular receptor, the hydrophobic fusion peptide is unmasked and interacts with the cellular membrane, inducing the fusion between cell and virion membranes. Later in infection, F proteins expressed at the plasma membrane of infected cells could mediate fusion with adjacent cells to form syncytia, a cytopathic effect that could lead to tissue necrosis. In Bos indicus (Zebu), this protein is Fusion glycoprotein F0 (F).